Consider the following 119-residue polypeptide: Large ribosomal subunit protein uL18 (119 aa).

The tract at residues 1-23 (MISKPDKNKTRQRRHARVRGKIS) is disordered. Basic residues predominate over residues 10–20 (TRQRRHARVRG).

It belongs to the universal ribosomal protein uL18 family. In terms of assembly, part of the 50S ribosomal subunit; part of the 5S rRNA/L5/L18/L25 subcomplex. Contacts the 5S and 23S rRNAs.

Functionally, this is one of the proteins that bind and probably mediate the attachment of the 5S RNA into the large ribosomal subunit, where it forms part of the central protuberance. The chain is Large ribosomal subunit protein uL18 from Lacticaseibacillus casei (strain BL23) (Lactobacillus casei).